A 491-amino-acid chain; its full sequence is MIGKRQTSTLNWDTVFAVPISVVNKAIKDKKSSPENFEFEDSSGSKCKGDFGDWQIITGGDGSNIRMKIPIYNFKAELVDDKYGIFNGNGGFESGEMNIQVKLKYFPHDKISKYKDVELVDLKVRSESADPIDPVVVMLSLKNLNGFYFNFLNEFGEDLQDIIEMFFIELVKQWLTENISLFNHIFSVVNLNLYIDQYSQWSWSRPSYVSYAYTDIEGDLDKSLLGVLCMTGGRNPDLRQQKVDPHAVPESSQCGFLIYEERVLRDLLLPTLPMKFKNSTVEDYEVINASGESGQYQYILRLKKGRSVSLDRVEANGSKYDPYMTEMSISLSNDVLKLEATTETSVGMGGKVGCDTINWYKLVLAKNGNGEQTISYEEVGEPTVINYVIKEGENWVWDVIAAIIAILATAVLAIFTGGAAFFIGGIVIAIITGFIAKTPDIILNWNLETSPSIDMMLENSTSQIIWNARDIFELDYVALNGPLQLGGELTV.

The protein belongs to the TULIP P47 family. In terms of assembly, heterodimer of OrfX1 and OrfX3; crystallizes as a dimer of heterodimers.

Expression of the ptox operon (ntnh-orfX1-orfX2-orfX3-pmp1) in B.thuringiensis kills Anopheles but not Aedes mosquito 3rd instar larvae. The ntnh-pmp1 construct is about half as toxic. The sequence is that of Protein OrfX3 from Paraclostridium bifermentans (Clostridium bifermentans).